A 414-amino-acid chain; its full sequence is Acyltransferase MYCGRDRAFT_85486 (414 aa).

The segment covering 16-25 (DGTSTVTIRP) has biased composition (polar residues). Residues 16–47 (DGTSTVTIRPTQKAAPSEEPSQDTAPSKKDSN) form a disordered region. His-329 contributes to the substrate binding site. Catalysis depends on Glu-367, which acts as the Proton acceptor.

The protein belongs to the lysine N-acyltransferase mbtK family.

The protein operates within siderophore biosynthesis. Functionally, acyltransferase; part of the gene cluster 14 that mediates the biosynthesis of a ferrichrome A-like siderophore which may contribute to organismal virulence. The first step of siderophore biosynthesis is performed by the HMG-CoA synthase (HMGS) MYCGRDRAFT_54740 which catalyzes the generation of HMG-CoA and CoA using acetoacetyl-CoA and acetyl-CoA as substrates. The enoyl-CoA isomerase/hydratase MYCGRDRAFT_76805 then catalyzes the conversion of HMG-CoA to methylglutaconyl-CoA. The acyltransferase MYCGRDRAFT_85486 then fuses methylglutaconyl-CoA with hydroxyornithine to yield methylglutaconyl hydroxyornithine. Methylglutaconyl hydroxyornithine is then available for use by the nonribosomal peptide synthetase NRPS2 to generate the ferrichrome A-like siderophore. The protein is Acyltransferase MYCGRDRAFT_85486 of Zymoseptoria tritici (strain CBS 115943 / IPO323) (Speckled leaf blotch fungus).